The following is a 189-amino-acid chain: Elongation factor P (189 aa).

Belongs to the elongation factor P family.

Its subcellular location is the cytoplasm. It participates in protein biosynthesis; polypeptide chain elongation. Involved in peptide bond synthesis. Stimulates efficient translation and peptide-bond synthesis on native or reconstituted 70S ribosomes in vitro. Probably functions indirectly by altering the affinity of the ribosome for aminoacyl-tRNA, thus increasing their reactivity as acceptors for peptidyl transferase. This chain is Elongation factor P, found in Campylobacter jejuni subsp. doylei (strain ATCC BAA-1458 / RM4099 / 269.97).